A 226-amino-acid polypeptide reads, in one-letter code: Probable functional amyloid protease FapD (226 aa).

The N-terminal stretch at 1 to 18 (MRTLILSLLLLVDLTTQA) is a signal peptide. A Peptidase C39 domain is found at 50–180 (QKTDFSCGAA…KGWNGIVFAV (131 aa)). C56 is an active-site residue.

This sequence belongs to the FapD family.

The protein resides in the periplasm. Its function is as follows. Probable protease that might be involved in processing fibril precursors. Upon overexpression of the endogenous six-gene locus (fapA-fapF), cells form large clumps during liquid growth, make large amounts of biofilm and produce amyloid fibrils. The sequence is that of Probable functional amyloid protease FapD from Pseudomonas aeruginosa (strain ATCC 15692 / DSM 22644 / CIP 104116 / JCM 14847 / LMG 12228 / 1C / PRS 101 / PAO1).